The chain runs to 401 residues: Pectate lyase (401 aa).

The N-terminal stretch at 1–20 (MATTILPLILFISSLAIASS) is a signal peptide. N38 carries N-linked (GlcNAc...) asparagine glycosylation. D199, D223, and D227 together coordinate Ca(2+). Residue R279 is part of the active site.

It belongs to the polysaccharide lyase 1 family. It depends on Ca(2+) as a cofactor. As to expression, expressed in sites of vascular differentiation and in new primordia on the flank of the shoot meristem.

It catalyses the reaction Eliminative cleavage of (1-&gt;4)-alpha-D-galacturonan to give oligosaccharides with 4-deoxy-alpha-D-galact-4-enuronosyl groups at their non-reducing ends.. The protein operates within glycan metabolism; pectin degradation; 2-dehydro-3-deoxy-D-gluconate from pectin: step 2/5. Functionally, involved in the degradation of pectin. May assist in the removal and modification of an existing pectin matrix in order to allow the deposition of newly synthesized walls polymers for a specialized function or to create an architecture that is extensible. This Zinnia elegans (Garden zinnia) protein is Pectate lyase.